We begin with the raw amino-acid sequence, 270 residues long: 4-hydroxy-tetrahydrodipicolinate reductase (270 aa).

7–12 (GANGKM) provides a ligand contact to NAD(+). Arginine 34 lines the NADP(+) pocket. NAD(+) contacts are provided by residues 97–99 (GTT) and 121–124 (SGNM). Histidine 155 (proton donor/acceptor) is an active-site residue. Histidine 156 serves as a coordination point for (S)-2,3,4,5-tetrahydrodipicolinate. Residue lysine 159 is the Proton donor of the active site. 165–166 (GT) is a binding site for (S)-2,3,4,5-tetrahydrodipicolinate.

Belongs to the DapB family.

It localises to the cytoplasm. It carries out the reaction (S)-2,3,4,5-tetrahydrodipicolinate + NAD(+) + H2O = (2S,4S)-4-hydroxy-2,3,4,5-tetrahydrodipicolinate + NADH + H(+). The catalysed reaction is (S)-2,3,4,5-tetrahydrodipicolinate + NADP(+) + H2O = (2S,4S)-4-hydroxy-2,3,4,5-tetrahydrodipicolinate + NADPH + H(+). It participates in amino-acid biosynthesis; L-lysine biosynthesis via DAP pathway; (S)-tetrahydrodipicolinate from L-aspartate: step 4/4. Functionally, catalyzes the conversion of 4-hydroxy-tetrahydrodipicolinate (HTPA) to tetrahydrodipicolinate. This chain is 4-hydroxy-tetrahydrodipicolinate reductase, found in Bartonella quintana (strain Toulouse) (Rochalimaea quintana).